The following is a 578-amino-acid chain: Putative transporter B0361.11 (578 aa).

The interval 1–30 (MSISRRSYEQFDEMKSENQENNSKKKSSER) is disordered. The next 11 helical transmembrane spans lie at 51–71 (IFTY…MYIM), 148–168 (FGLT…SMLA), 182–202 (ILAF…IFLI), 232–252 (AWIT…TLLV), 263–283 (YFIV…LPES), 339–359 (IWLL…YFAI), 373–393 (AFLY…PLMM), 399–419 (MIVI…TVFL), 426–446 (LVIM…HPIW), 457–477 (SLCF…SPYV), and 486–506 (WIPF…AFML). A compositionally biased stretch (low complexity) spans 532-550 (AYRRSKSSSSSVSALSKTS). The segment at 532-561 (AYRRSKSSSSSVSALSKTSVRSKKTLSSES) is disordered.

This sequence belongs to the major facilitator superfamily. Sugar transporter (TC 2.A.1.1) family.

The protein localises to the membrane. In Caenorhabditis elegans, this protein is Putative transporter B0361.11.